Here is a 264-residue protein sequence, read N- to C-terminus: Type III pantothenate kinase (264 aa).

Residue 6–13 participates in ATP binding; sequence DVGNTNIK. Position 108 to 111 (108 to 111) interacts with substrate; that stretch reads GSDR. Aspartate 110 functions as the Proton acceptor in the catalytic mechanism. Threonine 134 is a binding site for ATP.

Belongs to the type III pantothenate kinase family. In terms of assembly, homodimer. It depends on NH4(+) as a cofactor. K(+) serves as cofactor.

It localises to the cytoplasm. It catalyses the reaction (R)-pantothenate + ATP = (R)-4'-phosphopantothenate + ADP + H(+). It functions in the pathway cofactor biosynthesis; coenzyme A biosynthesis; CoA from (R)-pantothenate: step 1/5. Its function is as follows. Catalyzes the phosphorylation of pantothenate (Pan), the first step in CoA biosynthesis. This is Type III pantothenate kinase from Ehrlichia canis (strain Jake).